The sequence spans 651 residues: Maternal embryonic leucine zipper kinase (651 aa).

The 253-residue stretch at 13-265 folds into the Protein kinase domain; that stretch reads YELHETVGTG…VKHLLNHPWL (253 aa). Residues 19–27 and K42 contribute to the ATP site; that span reads VGTGGFAKV. The Proton acceptor role is filled by D134. At T169 the chain carries Phosphothreonine; by autocatalysis. S173 carries the post-translational modification Phosphoserine; by autocatalysis. A UBA-like region spans residues 284 to 323; the sequence is IDEDCVTELSVFYKYSRTSTTRLISEWSYDHITASYLLLH. The tract at residues 328 to 651 is autoinhibitory region; the sequence is HGKAVRLKHP…VEDILSSCKV (324 aa). Positions 410–490 are disordered; it reads SAPATPVVQR…TPTKKPIGTG (81 aa). T414 is subject to Phosphothreonine. Basic and acidic residues predominate over residues 423 to 441; the sequence is HKNEDKENSNTAVARDENV. 4 positions are modified to phosphothreonine: T449, T451, T481, and T483. Basic and acidic residues predominate over residues 471-483; sequence QTKEKNQSKETPT. Phosphoserine is present on residues S498, S505, and S517. The KA1 domain occupies 602-651; the sequence is SDFGKVTMQFELEVCQLSKSEVVGIRRQRLKGDAWVYKRLVEDILSSCKV.

It belongs to the protein kinase superfamily. CAMK Ser/Thr protein kinase family. SNF1 subfamily. In terms of processing, autophosphorylated: autophosphorylation of the T-loop at Thr-169 and Ser-173 is required for activation. Phosphorylated by the maturation promoting factor (MPF), composed of cdk1 and a cyclin-B. Also phosphorylated by some MAPK. Phosphorylated during oocyte maturation. Dephosphorylation destabilizes the protein. There is some ambiguity for some phosphosites: Thr-481/Thr-483 and Ser-505/Ser-517. Post-translationally, degraded when cells exit mitosis.

The protein localises to the cell membrane. It catalyses the reaction L-seryl-[protein] + ATP = O-phospho-L-seryl-[protein] + ADP + H(+). It carries out the reaction L-threonyl-[protein] + ATP = O-phospho-L-threonyl-[protein] + ADP + H(+). Its activity is regulated as follows. Activated by autophosphorylation of the T-loop at Thr-169 and Ser-173: in contrast to other members of the SNF1 subfamily, phosphorylation at Thr-169 is not mediated by STK11/LKB1 but via autophosphorylation instead. Its function is as follows. Serine/threonine-protein kinase involved in various processes such as cell cycle regulation, self-renewal of stem cells, apoptosis and splicing regulation. Also plays a role in primitive hematopoiesis, possibly by affecting the expression of genes critical for hematopoiesis. Plays a role in cytokinesis during early development. In Xenopus laevis (African clawed frog), this protein is Maternal embryonic leucine zipper kinase (melk).